A 711-amino-acid polypeptide reads, in one-letter code: Zinc finger CCCH domain-containing protein 32 (711 aa).

Residues M1–A21 are compositionally biased toward low complexity. The disordered stretch occupies residues M1–P23. C3H1-type zinc fingers lie at residues L31–N60, R62–I88, and G112–Q139. Disordered regions lie at residues K221–P246, R339–R376, S405–K561, and A573–D701. 2 stretches are compositionally biased toward basic and acidic residues: residues S364–R376 and R413–R427. The segment covering A428–H437 has biased composition (basic residues). 2 stretches are compositionally biased toward basic and acidic residues: residues S460–S509 and K585–H594. Acidic residues-rich tracts occupy residues E648–N663 and E686–D701.

This is Zinc finger CCCH domain-containing protein 32 from Oryza sativa subsp. japonica (Rice).